The following is a 423-amino-acid chain: Serine--tRNA ligase (423 aa).

231–233 (TGE) provides a ligand contact to L-serine. 262-264 (RSE) is an ATP binding site. E285 lines the L-serine pocket. ATP is bound at residue 349–352 (EISS). An L-serine-binding site is contributed by S385.

It belongs to the class-II aminoacyl-tRNA synthetase family. Type-1 seryl-tRNA synthetase subfamily. Homodimer. The tRNA molecule binds across the dimer.

It is found in the cytoplasm. The catalysed reaction is tRNA(Ser) + L-serine + ATP = L-seryl-tRNA(Ser) + AMP + diphosphate + H(+). The enzyme catalyses tRNA(Sec) + L-serine + ATP = L-seryl-tRNA(Sec) + AMP + diphosphate + H(+). It participates in aminoacyl-tRNA biosynthesis; selenocysteinyl-tRNA(Sec) biosynthesis; L-seryl-tRNA(Sec) from L-serine and tRNA(Sec): step 1/1. Functionally, catalyzes the attachment of serine to tRNA(Ser). Is also able to aminoacylate tRNA(Sec) with serine, to form the misacylated tRNA L-seryl-tRNA(Sec), which will be further converted into selenocysteinyl-tRNA(Sec). The chain is Serine--tRNA ligase from Coxiella burnetii (strain CbuG_Q212) (Coxiella burnetii (strain Q212)).